The sequence spans 122 residues: UPF0102 protein CPR_1677 (122 aa).

It belongs to the UPF0102 family.

In Clostridium perfringens (strain SM101 / Type A), this protein is UPF0102 protein CPR_1677.